The following is a 342-amino-acid chain: MTTLTITRPDDWHVHLRDGEVLADTVRDISRYNGRALIMPNTVPPVTTSEMALAYRDRIQAHNQTEQFSPLMSLYLTDNTTADEVRKAKASGAVVAAKLYPAGATTNSDSGVTDVKKIYPVLQAMQEVGMLLLVHGEVTTHDVDIFDREKTFLDNVLAPIVQDFPDLKIVLEHITTSDAVVFVKNANENVAATITAHHLLYNRNHMLVGGIKPHFYCLPILKRNTHQLALISAATSGNKKFFLGTDSAPHAKGAKESACGCAGSYTAHAAVELYAEVFEQAGKLENLEAFASHNGPDFYGLPRNQDTITLVKDAWPVPASMPFGGDIVVPIRAGENMEWKVK.

Zn(2+)-binding residues include H13 and H15. Substrate contacts are provided by residues 15-17 and N41; that span reads HLR. Zn(2+)-binding residues include K98, H135, and H173. K98 bears the N6-carboxylysine mark. H135 provides a ligand contact to substrate. L218 is a binding site for substrate. D246 provides a ligand contact to Zn(2+). Residue D246 is part of the active site. The substrate site is built by H250 and A262.

The protein belongs to the metallo-dependent hydrolases superfamily. DHOase family. Class II DHOase subfamily. As to quaternary structure, homodimer. Zn(2+) serves as cofactor.

It carries out the reaction (S)-dihydroorotate + H2O = N-carbamoyl-L-aspartate + H(+). Its pathway is pyrimidine metabolism; UMP biosynthesis via de novo pathway; (S)-dihydroorotate from bicarbonate: step 3/3. Catalyzes the reversible cyclization of carbamoyl aspartate to dihydroorotate. This Vibrio vulnificus (strain CMCP6) protein is Dihydroorotase.